Consider the following 728-residue polypeptide: Lutropin-choriogonadotropic hormone receptor (728 aa).

Residues 1-19 (MLPALLPLLLPALLPGAGG) form the signal peptide. Over 20 to 389 (GRCPQRCACT…DILGYSFLRV (370 aa)) the chain is Extracellular. LRR repeat units lie at residues 92–116 (LPAL…AFRN), 117–142 (LPRL…IFSS), 144–166 (AHFI…AFQG), 168–191 (SNES…AFNG), 193–215 (KLNQ…ALRG), and 216–239 (ATGP…GLEA). A helical transmembrane segment spans residues 390–410 (LIWFINILALAGNFIVLLVLI). At 411–420 (TSHYKLTVPR) the chain is on the cytoplasmic side. The helical transmembrane segment at 421–441 (FLMCNLSFADFCMGLYLLLIA) threads the bilayer. Residues 442-466 (SVDAQTSGQYYNHAIDWQTGSGCST) lie on the Extracellular side of the membrane. A disulfide bridge connects residues C464 and C539. The helical transmembrane segment at 467–487 (AGFFTVFASELSVYTLTVITI) threads the bilayer. The Cytoplasmic portion of the chain corresponds to 488–507 (ERWHTITYAMQLDRKLRLRH). Residues 508–528 (AVPIMLGGWVFSILIAVLPLL) form a helical membrane-spanning segment. Topologically, residues 529–551 (GVSSYMKVSICLPMDIETGLSQA) are extracellular. A helical transmembrane segment spans residues 552-572 (YILLILMLNVIAFLVICACYI). At 573 to 595 (KIYVAVQNPELVAANKDTKIAKR) the chain is on the cytoplasmic side. The chain crosses the membrane as a helical span at residues 596–616 (MAILIFTDFTCMAPISFFAIS). At 617–630 (AAIKVPLITVTNSK) the chain is on the extracellular side. Residues 631–651 (ILLVLFYPVNSCANPFLYAIF) traverse the membrane as a helical segment. Topologically, residues 652 to 728 (TKAFQRDFFL…STKKSQPECQ (77 aa)) are cytoplasmic.

This sequence belongs to the G-protein coupled receptor 1 family. FSH/LSH/TSH subfamily. Expressed in ovarian follicle granulosa cells. Expressed in ovarian follicle theca cells.

It localises to the cell membrane. In terms of biological role, receptor for lutropin-choriogonadotropic hormone. The activity of this receptor is mediated by G proteins which activate adenylate cyclase. The sequence is that of Lutropin-choriogonadotropic hormone receptor from Gallus gallus (Chicken).